The primary structure comprises 236 residues: MSIHIAAQQGEIADKILLPGDPLRAKFIAENFLGDAVCFNEVRNMFGYTGTYKGHRVSVMGTGMGMPSISIYARELIVDYGVKKLIRVGTAGSLNEEVHVRELVLAQAAATNSNIVRNDWPQYDFPQIASFDLLDKAYHIAKELGMTTHVGNVLSSDVFYSNYFEKNIELGKWGVKAVEMEAAALYYLAAQYHVDALAIMTISDSLVNPDEDTTAEERQNTFTDMMKVGLETLIAE.

Residue His4 coordinates a purine D-ribonucleoside. Residues Gly20, Arg24, Arg43, and 87 to 90 (RVGT) each bind phosphate. A purine D-ribonucleoside is bound by residues 179 to 181 (EME) and 203 to 204 (SD). Residue Asp204 is the Proton donor of the active site.

This sequence belongs to the PNP/UDP phosphorylase family. Homohexamer; trimer of homodimers.

It catalyses the reaction a purine D-ribonucleoside + phosphate = a purine nucleobase + alpha-D-ribose 1-phosphate. It carries out the reaction a purine 2'-deoxy-D-ribonucleoside + phosphate = a purine nucleobase + 2-deoxy-alpha-D-ribose 1-phosphate. Its function is as follows. Catalyzes the reversible phosphorolytic breakdown of the N-glycosidic bond in the beta-(deoxy)ribonucleoside molecules, with the formation of the corresponding free purine bases and pentose-1-phosphate. This chain is Purine nucleoside phosphorylase DeoD-type, found in Streptococcus pneumoniae serotype 2 (strain D39 / NCTC 7466).